A 326-amino-acid polypeptide reads, in one-letter code: Ribose operon repressor (326 aa).

An HTH lacI-type domain is found at 1–56; it reads MATIKDVAGAAGVSVATVSRNLNDNGYVHEETRTRVIAAMAKLNYYPNEVARSLYK. The H-T-H motif DNA-binding region spans 4–23; it reads IKDVAGAAGVSVATVSRNLN.

In terms of biological role, transcriptional repressor for the ribose rbsDACBK operon. This chain is Ribose operon repressor (rbsR), found in Bacillus subtilis (strain 168).